We begin with the raw amino-acid sequence, 342 residues long: L-threonine 3-dehydrogenase (342 aa).

Cysteine 38 lines the Zn(2+) pocket. Active-site charge relay system residues include threonine 40 and histidine 43. 6 residues coordinate Zn(2+): histidine 63, glutamate 64, cysteine 93, cysteine 96, cysteine 99, and cysteine 107. NAD(+) is bound by residues isoleucine 175, aspartate 195, arginine 200, 262-264 (LGI), and 286-287 (IY).

This sequence belongs to the zinc-containing alcohol dehydrogenase family. In terms of assembly, homotetramer. It depends on Zn(2+) as a cofactor.

It localises to the cytoplasm. It catalyses the reaction L-threonine + NAD(+) = (2S)-2-amino-3-oxobutanoate + NADH + H(+). Its pathway is amino-acid degradation; L-threonine degradation via oxydo-reductase pathway; glycine from L-threonine: step 1/2. Its function is as follows. Catalyzes the NAD(+)-dependent oxidation of L-threonine to 2-amino-3-ketobutyrate. This Burkholderia lata (strain ATCC 17760 / DSM 23089 / LMG 22485 / NCIMB 9086 / R18194 / 383) protein is L-threonine 3-dehydrogenase.